The sequence spans 339 residues: UDP-3-O-acylglucosamine N-acyltransferase (339 aa).

The active-site Proton acceptor is His248.

This sequence belongs to the transferase hexapeptide repeat family. LpxD subfamily. In terms of assembly, homotrimer.

It catalyses the reaction a UDP-3-O-[(3R)-3-hydroxyacyl]-alpha-D-glucosamine + a (3R)-hydroxyacyl-[ACP] = a UDP-2-N,3-O-bis[(3R)-3-hydroxyacyl]-alpha-D-glucosamine + holo-[ACP] + H(+). Its pathway is bacterial outer membrane biogenesis; LPS lipid A biosynthesis. In terms of biological role, catalyzes the N-acylation of UDP-3-O-acylglucosamine using 3-hydroxyacyl-ACP as the acyl donor. Is involved in the biosynthesis of lipid A, a phosphorylated glycolipid that anchors the lipopolysaccharide to the outer membrane of the cell. The polypeptide is UDP-3-O-acylglucosamine N-acyltransferase (Caulobacter vibrioides (strain NA1000 / CB15N) (Caulobacter crescentus)).